A 454-amino-acid polypeptide reads, in one-letter code: uncharacterized protein (454 aa).

Belongs to the outer membrane factor (OMF) (TC 1.B.17) family.

This is an uncharacterized protein from Haemophilus influenzae (strain ATCC 51907 / DSM 11121 / KW20 / Rd).